The chain runs to 463 residues: uncharacterized protein (463 aa).

The TRAM domain occupies 9 to 67 (VLKKGQRFPLTIKRLGINGEGVGYFKRHVVFVPGALPGEEVVVEVTDVKPRFAEASIRK). [4Fe-4S] cluster-binding residues include cysteine 80, cysteine 86, cysteine 89, and cysteine 169. Residues glutamine 293, tyrosine 322, aspartate 343, and aspartate 391 each contribute to the S-adenosyl-L-methionine site. Residue cysteine 418 is the Nucleophile of the active site.

This sequence belongs to the class I-like SAM-binding methyltransferase superfamily. RNA M5U methyltransferase family.

This is an uncharacterized protein from Halalkalibacterium halodurans (strain ATCC BAA-125 / DSM 18197 / FERM 7344 / JCM 9153 / C-125) (Bacillus halodurans).